Reading from the N-terminus, the 420-residue chain is D-tagatose-1,6-bisphosphate aldolase subunit GatZ (420 aa).

Belongs to the GatZ/KbaZ family. GatZ subfamily. In terms of assembly, forms a complex with GatY.

It functions in the pathway carbohydrate metabolism; D-tagatose 6-phosphate degradation; D-glyceraldehyde 3-phosphate and glycerone phosphate from D-tagatose 6-phosphate: step 2/2. Component of the tagatose-1,6-bisphosphate aldolase GatYZ that is required for full activity and stability of the Y subunit. Could have a chaperone-like function for the proper and stable folding of GatY. When expressed alone, GatZ does not show any aldolase activity. Is involved in the catabolism of galactitol. The chain is D-tagatose-1,6-bisphosphate aldolase subunit GatZ from Escherichia coli O17:K52:H18 (strain UMN026 / ExPEC).